Reading from the N-terminus, the 444-residue chain is Probable glycine dehydrogenase (decarboxylating) subunit 1 (444 aa).

Belongs to the GcvP family. N-terminal subunit subfamily. In terms of assembly, the glycine cleavage system is composed of four proteins: P, T, L and H. In this organism, the P 'protein' is a heterodimer of two subunits.

It catalyses the reaction N(6)-[(R)-lipoyl]-L-lysyl-[glycine-cleavage complex H protein] + glycine + H(+) = N(6)-[(R)-S(8)-aminomethyldihydrolipoyl]-L-lysyl-[glycine-cleavage complex H protein] + CO2. The glycine cleavage system catalyzes the degradation of glycine. The P protein binds the alpha-amino group of glycine through its pyridoxal phosphate cofactor; CO(2) is released and the remaining methylamine moiety is then transferred to the lipoamide cofactor of the H protein. This chain is Probable glycine dehydrogenase (decarboxylating) subunit 1, found in Chlorobaculum tepidum (strain ATCC 49652 / DSM 12025 / NBRC 103806 / TLS) (Chlorobium tepidum).